Reading from the N-terminus, the 313-residue chain is HTH-type transcriptional regulator CbbR (313 aa).

In terms of domain architecture, HTH lysR-type spans 1–61 (MRNVTFRQLR…DRTRGGMVPT (61 aa)). Residues 21–40 (INLAAEALGLTGPALTLQIQ) constitute a DNA-binding region (H-T-H motif).

Belongs to the LysR transcriptional regulatory family.

Functionally, transcriptional activator for the cbb operon for RuBisCO and other Calvin cycle genes. The polypeptide is HTH-type transcriptional regulator CbbR (cbbR) (Rhizobium meliloti (strain 1021) (Ensifer meliloti)).